Here is a 388-residue protein sequence, read N- to C-terminus: Succinate--CoA ligase [ADP-forming] subunit beta (388 aa).

An ATP-grasp domain is found at 9–244; that stretch reads KEILRKFGVA…LDEEDPAEIE (236 aa). Residues Lys46, 53-55, Glu99, Ala102, and Glu107 each bind ATP; that span reads GRG. 2 residues coordinate Mg(2+): Asn199 and Asp213. Substrate contacts are provided by residues Asn264 and 321–323; that span reads GIM.

This sequence belongs to the succinate/malate CoA ligase beta subunit family. Heterotetramer of two alpha and two beta subunits. Mg(2+) is required as a cofactor.

It catalyses the reaction succinate + ATP + CoA = succinyl-CoA + ADP + phosphate. The enzyme catalyses GTP + succinate + CoA = succinyl-CoA + GDP + phosphate. The protein operates within carbohydrate metabolism; tricarboxylic acid cycle; succinate from succinyl-CoA (ligase route): step 1/1. Succinyl-CoA synthetase functions in the citric acid cycle (TCA), coupling the hydrolysis of succinyl-CoA to the synthesis of either ATP or GTP and thus represents the only step of substrate-level phosphorylation in the TCA. The beta subunit provides nucleotide specificity of the enzyme and binds the substrate succinate, while the binding sites for coenzyme A and phosphate are found in the alpha subunit. In Burkholderia vietnamiensis (strain G4 / LMG 22486) (Burkholderia cepacia (strain R1808)), this protein is Succinate--CoA ligase [ADP-forming] subunit beta.